The chain runs to 869 residues: Leucine--tRNA ligase (869 aa).

The 'HIGH' region signature appears at 42 to 52 (PYPSGNLHMGH). Residues 622-626 (KMSKS) carry the 'KMSKS' region motif. Lys-625 is an ATP binding site.

The protein belongs to the class-I aminoacyl-tRNA synthetase family.

The protein resides in the cytoplasm. The catalysed reaction is tRNA(Leu) + L-leucine + ATP = L-leucyl-tRNA(Leu) + AMP + diphosphate. The sequence is that of Leucine--tRNA ligase from Synechocystis sp. (strain ATCC 27184 / PCC 6803 / Kazusa).